The chain runs to 119 residues: Flagellar transcriptional regulator FlhD (119 aa).

It belongs to the FlhD family. As to quaternary structure, homodimer; disulfide-linked. Forms a heterohexamer composed of two FlhC and four FlhD subunits. Each FlhC binds a FlhD dimer, forming a heterotrimer, and a hexamer assembles by dimerization of two heterotrimers.

The protein resides in the cytoplasm. In terms of biological role, functions in complex with FlhC as a master transcriptional regulator that regulates transcription of several flagellar and non-flagellar operons by binding to their promoter region. Activates expression of class 2 flagellar genes, including fliA, which is a flagellum-specific sigma factor that turns on the class 3 genes. Also regulates genes whose products function in a variety of physiological pathways. The chain is Flagellar transcriptional regulator FlhD from Escherichia fergusonii (strain ATCC 35469 / DSM 13698 / CCUG 18766 / IAM 14443 / JCM 21226 / LMG 7866 / NBRC 102419 / NCTC 12128 / CDC 0568-73).